A 246-amino-acid chain; its full sequence is Small ribosomal subunit protein uS2 (246 aa).

The disordered stretch occupies residues 224-246 (AKQGEEEAEAAEETAPETETTTA). A compositionally biased stretch (acidic residues) spans 229–239 (EEAEAAEETAP).

The protein belongs to the universal ribosomal protein uS2 family.

The chain is Small ribosomal subunit protein uS2 from Bacillus velezensis (strain DSM 23117 / BGSC 10A6 / LMG 26770 / FZB42) (Bacillus amyloliquefaciens subsp. plantarum).